We begin with the raw amino-acid sequence, 1203 residues long: Zinc finger and BTB domain-containing protein 38 (1203 aa).

Positions Cys-33–Arg-100 constitute a BTB domain. Lys-43 is covalently cross-linked (Glycyl lysine isopeptide (Lys-Gly) (interchain with G-Cter in SUMO2)). The residue at position 130 (Ser-130) is a Phosphoserine. Residues Lys-145, Lys-148, Lys-151, and Lys-260 each participate in a glycyl lysine isopeptide (Lys-Gly) (interchain with G-Cter in SUMO2) cross-link. The disordered stretch occupies residues Glu-230–Ala-334. The span at Thr-269–Asn-280 shows a compositional bias: polar residues. Residues Pro-299–Glu-522 form an interaction with CBFA2T3 region. A compositionally biased stretch (basic and acidic residues) spans Gly-313 to Glu-322. The segment at Tyr-341–His-363 adopts a C2H2-type 1 zinc-finger fold. The C2H2-type 2; degenerate zinc finger occupies Phe-370–Arg-394. 3 consecutive C2H2-type zinc fingers follow at residues Tyr-459 to His-481, Tyr-487 to His-509, and Tyr-515 to His-538. Glycyl lysine isopeptide (Lys-Gly) (interchain with G-Cter in SUMO2) cross-links involve residues Lys-549 and Lys-556. Composition is skewed to polar residues over residues Arg-581–Pro-598, Leu-607–Pro-628, Pro-635–Ala-644, and Ser-731–Ala-741. Disordered regions lie at residues Arg-581–Ala-644 and Ser-731–Asn-776. The span at Lys-747–Ser-757 shows a compositional bias: basic and acidic residues. Residues Lys-750, Lys-755, Lys-796, Lys-806, Lys-813, Lys-834, Lys-842, and Lys-849 each participate in a glycyl lysine isopeptide (Lys-Gly) (interchain with G-Cter in SUMO2) cross-link. Disordered stretches follow at residues Lys-857 to Gly-882 and Phe-895 to Tyr-914. The segment covering Thr-866–Gly-877 has biased composition (basic and acidic residues). Glycyl lysine isopeptide (Lys-Gly) (interchain with G-Cter in SUMO2) cross-links involve residues Lys-915, Lys-971, Lys-976, Lys-984, Lys-988, Lys-998, Lys-1024, and Lys-1033. 5 C2H2-type zinc fingers span residues Tyr-1017 to His-1039, Tyr-1045 to His-1067, Phe-1073 to His-1095, Tyr-1101 to His-1123, and Phe-1132 to His-1154. Residues Lys-1116, Lys-1139, Lys-1142, Lys-1157, and Lys-1190 each participate in a glycyl lysine isopeptide (Lys-Gly) (interchain with G-Cter in SUMO2) cross-link. The disordered stretch occupies residues Asn-1172–Glu-1203.

In terms of assembly, interacts with CBFA2T3, ZBTB4 and RBBP6. Ubiquitinated by RBBP6; leading to its degradation by the proteasome. As to expression, widely expressed throughout the adult brain where it is found mainly in neurons. Also expressed in the adrenal medulla. Not detected in non-neural tissues including heart, spleen, liver and muscle. In the embryo, expressed in the developing brain and spinal cord but not in the migratory neural crest. Also expressed in the limbs, transiently in somites, and in the embryonic liver. In the embryonic neural tube, expression is restricted to late postmitotic neurons.

It localises to the nucleus. The protein resides in the chromosome. Transcriptional regulator with bimodal DNA-binding specificity. Binds with a higher affinity to methylated CpG dinucleotides in the consensus sequence 5'-CGCG-3' but can also bind to E-box elements (5'-CACGTG-3'). Can also bind specifically to a single methyl-CpG pair. Represses transcription in a methyl-CpG-dependent manner. Plays an important role in regulating DNA-replication and common fragile sites (CFS) stability in a RBBP6- and MCM10-dependent manner; represses expression of MCM10 which plays an important role in DNA-replication. Acts as a transcriptional activator. May be involved in the differentiation and/or survival of late postmitotic neurons. The polypeptide is Zinc finger and BTB domain-containing protein 38 (Rattus norvegicus (Rat)).